The sequence spans 372 residues: Lung adenoma susceptibility protein 2 (372 aa).

The first 31 residues, 1–31, serve as a signal peptide directing secretion; sequence MAKSKTKHRLCSQESSVSALLASCTLSGSNS. Ser161 is modified (phosphoserine). The disordered stretch occupies residues 248-268; that stretch reads KSPVPVNSDDSPQQTSRAKSA. Over residues 255–265 the composition is skewed to polar residues; sequence SDDSPQQTSRA.

Its subcellular location is the secreted. Functionally, might play a role in cell proliferation. The protein is Lung adenoma susceptibility protein 2 (LAS2) of Homo sapiens (Human).